Reading from the N-terminus, the 377-residue chain is MPRPIEALIHPDALAHNLLQARRHAGDAKLWAVIKANAYGHGIERVWPALLGADGLAMLDLDEAQRVRNLGWRGPVLLLEGCFEARDLELCSRLNLWHVVHHDDQIGWLAAHKTHQPHRVFLKMNSGMNRLGFTPQALRSAWVRLNALPQVDEISLMTHFSDADSPRPGADGIAAQVARFVEATHDLPGERSLSNSAAILRHCERAEVRADWVRSGILSYGSSPDHPQHDIGHWNLRPAMTLRSRLIATQQLQAGDSVGYGSRFVAQQPMRIGIVACGYADGYPRHAPGDTGNATPVLVDGLRTHTVGRVSMDMLAVDLSELPAAGVGSEVTLWGHGPHGSLLPIDAVAQAAGTIGYELMCALAQRVPTHVQDLEPR.

Catalysis depends on Lys35, which acts as the Proton acceptor; specific for D-alanine. Lys35 is modified (N6-(pyridoxal phosphate)lysine). Arg130 contributes to the substrate binding site. Tyr260 acts as the Proton acceptor; specific for L-alanine in catalysis. Met312 lines the substrate pocket.

The protein belongs to the alanine racemase family. The cofactor is pyridoxal 5'-phosphate.

The catalysed reaction is L-alanine = D-alanine. It functions in the pathway amino-acid biosynthesis; D-alanine biosynthesis; D-alanine from L-alanine: step 1/1. Its function is as follows. Catalyzes the interconversion of L-alanine and D-alanine. May also act on other amino acids. The chain is Alanine racemase (alr) from Leptothrix cholodnii (strain ATCC 51168 / LMG 8142 / SP-6) (Leptothrix discophora (strain SP-6)).